The chain runs to 298 residues: MARKKGREIHGWLIVDKPAGIGSTDVVGKVRWALDAKKAGHAGTLDPDATGVLAVALGEATKTVPILTDALKAYDFTVSWGAETSTDDASGGVVKTSDARPDEAAIRAALPEFTGEIMQVPPAVSAVRVDGARAYDLAREGEVVELAARPLWVESLELLGAARDSAELRMVCGKGGYVRSIARDLGRKLGCLGHVAQLRRIWSGPFEAGDGFAFDRIDRANQAEIEAALLPLQAALADLPEMQATEIGATRILNGNPGQVLGHAEFGEEVWVSRNGRALCIGRYMGGEVQPSRVFNLG.

The active-site Nucleophile is D46.

This sequence belongs to the pseudouridine synthase TruB family. Type 1 subfamily.

The enzyme catalyses uridine(55) in tRNA = pseudouridine(55) in tRNA. Functionally, responsible for synthesis of pseudouridine from uracil-55 in the psi GC loop of transfer RNAs. The sequence is that of tRNA pseudouridine synthase B from Paracoccus denitrificans (strain Pd 1222).